The primary structure comprises 57 residues: Large ribosomal subunit protein bL32 (57 aa).

This sequence belongs to the bacterial ribosomal protein bL32 family.

The protein is Large ribosomal subunit protein bL32 of Bacillus licheniformis (strain ATCC 14580 / DSM 13 / JCM 2505 / CCUG 7422 / NBRC 12200 / NCIMB 9375 / NCTC 10341 / NRRL NRS-1264 / Gibson 46).